The following is a 74-amino-acid chain: uncharacterized protein (74 aa).

Disordered stretches follow at residues 1 to 26 (MNGP…SGVF) and 46 to 74 (ITNS…SFTQ). Residues 34–50 (VSNKSIMLISLKITNSP) form a helical membrane-spanning segment. Over residues 47 to 74 (TNSPNSNSRGSSSSSSTSKSSSKTSFTQ) the composition is skewed to low complexity.

It localises to the membrane. This is an uncharacterized protein from Dictyostelium discoideum (Social amoeba).